The primary structure comprises 562 residues: Serine/threonine-protein kinase dst3 (562 aa).

Residues phenylalanine 23–isoleucine 285 form the Protein kinase domain. ATP is bound by residues valine 29–valine 37 and lysine 59. The Proton acceptor role is filled by aspartate 154. Disordered stretches follow at residues leucine 316–serine 339 and serine 366–isoleucine 562. Residues glutamine 322–serine 339 show a composition bias toward polar residues. Composition is skewed to low complexity over residues asparagine 421–threonine 431, glutamine 442–lysine 454, and threonine 476–threonine 494. Polar residues predominate over residues glycine 495 to serine 522. Acidic residues predominate over residues glutamate 542 to isoleucine 562.

This sequence belongs to the protein kinase superfamily. STE Ser/Thr protein kinase family. STE20 subfamily. Mg(2+) serves as cofactor.

It carries out the reaction L-seryl-[protein] + ATP = O-phospho-L-seryl-[protein] + ADP + H(+). The enzyme catalyses L-threonyl-[protein] + ATP = O-phospho-L-threonyl-[protein] + ADP + H(+). This chain is Serine/threonine-protein kinase dst3, found in Dictyostelium discoideum (Social amoeba).